Reading from the N-terminus, the 341-residue chain is L-threonine 3-dehydrogenase (341 aa).

Cys-38 lines the Zn(2+) pocket. Active-site charge relay system residues include Thr-40 and His-43. Zn(2+) contacts are provided by His-63, Glu-64, Cys-93, Cys-96, Cys-99, and Cys-107. NAD(+)-binding positions include Ile-175, Asp-195, Arg-200, 262–264, and 286–287; these read LGI and IY.

It belongs to the zinc-containing alcohol dehydrogenase family. Homotetramer. Zn(2+) is required as a cofactor.

The protein localises to the cytoplasm. It carries out the reaction L-threonine + NAD(+) = (2S)-2-amino-3-oxobutanoate + NADH + H(+). It participates in amino-acid degradation; L-threonine degradation via oxydo-reductase pathway; glycine from L-threonine: step 1/2. Catalyzes the NAD(+)-dependent oxidation of L-threonine to 2-amino-3-ketobutyrate. The chain is L-threonine 3-dehydrogenase from Photorhabdus laumondii subsp. laumondii (strain DSM 15139 / CIP 105565 / TT01) (Photorhabdus luminescens subsp. laumondii).